Here is a 351-residue protein sequence, read N- to C-terminus: Ferredoxin--NADP reductase (351 aa).

Asp-44, Gln-52, Tyr-57, Ile-97, Phe-132, Asp-296, and Ser-337 together coordinate FAD.

The protein belongs to the ferredoxin--NADP reductase type 2 family. Homodimer. It depends on FAD as a cofactor.

The enzyme catalyses 2 reduced [2Fe-2S]-[ferredoxin] + NADP(+) + H(+) = 2 oxidized [2Fe-2S]-[ferredoxin] + NADPH. This is Ferredoxin--NADP reductase from Burkholderia vietnamiensis (strain G4 / LMG 22486) (Burkholderia cepacia (strain R1808)).